Consider the following 145-residue polypeptide: Arginine repressor (145 aa).

It belongs to the ArgR family.

Its subcellular location is the cytoplasm. The protein operates within amino-acid biosynthesis; L-arginine biosynthesis [regulation]. Functionally, regulates arginine biosynthesis genes. The protein is Arginine repressor of Streptococcus equi subsp. zooepidemicus (strain H70).